The following is a 74-amino-acid chain: UPF0291 protein EF_0064 (74 aa).

Residues 53–74 (YDPTGEDVTPEKLKEEQQKYFD) are disordered. Residues 61-74 (TPEKLKEEQQKYFD) are compositionally biased toward basic and acidic residues.

Belongs to the UPF0291 family.

The protein localises to the cytoplasm. The polypeptide is UPF0291 protein EF_0064 (Enterococcus faecalis (strain ATCC 700802 / V583)).